The following is a 488-amino-acid chain: uncharacterized protein (488 aa).

Its subcellular location is the cytoplasm. The protein resides in the nucleus. This is an uncharacterized protein from Schizosaccharomyces pombe (strain 972 / ATCC 24843) (Fission yeast).